The following is a 103-amino-acid chain: Large ribosomal subunit protein bL21 (103 aa).

It belongs to the bacterial ribosomal protein bL21 family. Part of the 50S ribosomal subunit. Contacts protein L20.

Functionally, this protein binds to 23S rRNA in the presence of protein L20. The chain is Large ribosomal subunit protein bL21 from Tolumonas auensis (strain DSM 9187 / NBRC 110442 / TA 4).